Consider the following 1715-residue polypeptide: Rho guanine nucleotide exchange factor TIAM2 (1715 aa).

Polar residues-rich tracts occupy residues 1–22 (MGNS…TVTG) and 218–229 (GSPSSQRPSPTD). Disordered stretches follow at residues 1-27 (MGNS…KQKP), 174-249 (FHNG…WYDS), 263-294 (SFLA…SSLS), and 385-418 (TGSL…NAEG). Residue glycine 2 is the site of N-myristoyl glycine attachment. Residues 235–245 (SKGSSLSSESS) are compositionally biased toward low complexity. Over residues 395–411 (LQEPRSMEGSEYFDSHS) the composition is skewed to basic and acidic residues. Residues 504-618 (VVRKAGWLFF…WVTAIHSACA (115 aa)) form the PH 1 domain. Positions 665-692 (PKNRKAIENQIRQWEQNLEKFHMDLFRM) form a coiled coil. Positions 831–902 (VQTYVHFQDN…YMQEQVYDEI (72 aa)) constitute an RBD domain. One can recognise a PDZ domain in the interval 911-997 (DVQLTKTGDM…GLTLVARPVT (87 aa)). The tract at residues 1092–1113 (THTNSMEAPTESHDPPPRPLAR) is disordered. One can recognise a DH domain in the interval 1120-1314 (RLRKVIQELV…EKVASHINEM (195 aa)). The PH 2 domain occupies 1347–1478 (LLMHSTVSWL…KVIRSILREN (132 aa)). Residues 1515 to 1582 (SLKGLRTSSS…EGLAEFPDGL (68 aa)) are disordered. The segment covering 1522–1532 (SSSSEWPSEPS) has biased composition (low complexity). Residues 1533–1552 (KGNSLDSDECSLSSGTQSSG) show a composition bias toward polar residues. The span at 1557-1572 (ESRRDSKSTELEKDAQ) shows a compositional bias: basic and acidic residues. Residue serine 1604 is modified to Phosphoserine. Threonine 1662 is subject to Phosphothreonine.

Belongs to the TIAM family. Interacts with MAP1A, MAP1B, PARP1 and YWHAE. Interacts with CD44, PARD3 and MAPK8IP2. In terms of processing, phosphorylated on serine and threonine residues. Phosphorylated on Thr-1662 by Rho-kinase. Its phosphorylation by Rho-kinase inhibits its guanine nucleotide exchange activity, its interaction with MAP1A, MAP1B, PARP1 and YWHAE and reduces its ability to promote neurite growth. In terms of tissue distribution, expressed in fetal brain (at protein level). Expressed in the olfactory bulb, cortical plate of the cerebral cortex, caudate putamen, hippocampus, ependymal cells of the lateral surface of the lateral ventricles of the brain. Weakly expressed in heart, lung, liver, skeletal muscle, kidney and testis.

It is found in the cytoplasm. It localises to the cell projection. Its subcellular location is the lamellipodium. The protein localises to the filopodium. The protein resides in the growth cone. It is found in the neuron projection. It localises to the perikaryon. Its function is as follows. Modulates the activity of RHO-like proteins and connects extracellular signals to cytoskeletal activities. Acts as a GDP-dissociation stimulator protein that stimulates the GDP-GTP exchange activity of RHO-like GTPases and activates them. Activates specifically RAC1, but not CDC42 and RHOA. Mediates extracellular laminin signals to activate Rac1, contributing to neurite growth. Involved in lamellipodial formation and advancement of the growth cone of embryonic hippocampal neurons. Promotes migration of neurons in the cerebral cortex. When overexpressed, induces membrane ruffling accompanied by the accumulation of actin filaments along the altered plasma membrane. This Mus musculus (Mouse) protein is Rho guanine nucleotide exchange factor TIAM2.